The primary structure comprises 238 residues: CASP-like protein 2BC2 (238 aa).

Topologically, residues 1-66 (MPSSTYPRRR…FHQKVAVEKR (66 aa)) are cytoplasmic. Residues 67–87 (LKIGEVILRFAMIALALVAAV) traverse the membrane as a helical segment. Over 88–111 (RVGTDTQTRTIFTIEKKAKYSDMK) the chain is Extracellular. A helical transmembrane segment spans residues 112-132 (ALVFLVVMNGIVASYSLLQGL). Residues 133–148 (RCVLSIYTQSPLTSKP) are Cytoplasmic-facing. The helical transmembrane segment at 149–169 (LAWLIFALDQTMAYFSLAAAA) threads the bilayer. The Extracellular segment spans residues 170-200 (AAAESAYLAERGQTEFQWMKVCIFYEKFCHQ). The helical transmembrane segment at 201–221 (IGEGLVSTFLVSLSMATVSGM) threads the bilayer. Topologically, residues 222 to 238 (SAYHLFRLYGSKGKSIQ) are cytoplasmic.

This sequence belongs to the Casparian strip membrane proteins (CASP) family. Homodimer and heterodimers.

The protein localises to the cell membrane. The protein is CASP-like protein 2BC2 of Picea sitchensis (Sitka spruce).